A 1135-amino-acid polypeptide reads, in one-letter code: Envelopment polyprotein (1135 aa).

An N-terminal signal peptide occupies residues 1 to 18 (MGIWKWLVMASLVWPVLT). The Lumenal portion of the chain corresponds to 19–485 (LRNVYDMKIE…VPGFHGWATA (467 aa)). Cystine bridges form between cysteine 29-cysteine 151, cysteine 63-cysteine 157, cysteine 109-cysteine 128, cysteine 133-cysteine 138, cysteine 175-cysteine 185, cysteine 210-cysteine 247, cysteine 234-cysteine 351, cysteine 376-cysteine 435, cysteine 380-cysteine 389, cysteine 405-cysteine 424, and cysteine 452-cysteine 475. N-linked (GlcNAc...) asparagine; by host glycosylation occurs at asparagine 134. N-linked (GlcNAc...) asparagine; by host glycosylation is found at asparagine 235 and asparagine 347. N-linked (GlcNAc...) asparagine; by host glycosylation occurs at asparagine 399. The chain crosses the membrane as a helical span at residues 486–506 (ALLVTFCFGWVLIPAITFIIL). Residues 507-627 (TILKFIANIF…LNLFRYKSRC (121 aa)) lie on the Cytoplasmic side of the membrane. The tract at residues 516-533 (FHTSNQENRLKSVLRKIK) is binding to the ribonucleoprotein. 2 CCHC-type zinc fingers span residues 545 to 565 (CDVC…GVSC) and 570 to 591 (CPYC…YKVC). Binding to the ribonucleoprotein regions lie at residues 588-605 (YKVC…KKTV), 592-603 (QVTHRFRDDLKK), and 611-625 (TPGC…RYKS). One can recognise an ITAM domain in the interval 611–634 (TPGCYRTLNLFRYKSRCYIFTMWI). Residues 615-618 (YRTL) carry the YxxL motif. The chain crosses the membrane as a helical span at residues 628 to 648 (YIFTMWIFLLVLESILWAASA). The Lumenal segment spans residues 649–1105 (SETPLTPVWN…EWISGIFSGN (457 aa)). 8 disulfides stabilise this stretch: cysteine 735-cysteine 770, cysteine 739-cysteine 777, cysteine 751-cysteine 885, cysteine 765-cysteine 896, cysteine 780-cysteine 904, cysteine 806-cysteine 815, cysteine 823-cysteine 832, and cysteine 863-cysteine 867. Residues 757–777 (YQYETSWGCNPSDCPGVGTGC) are fusion loop. Asparagine 928 carries an N-linked (GlcNAc...) asparagine; by host glycan. 5 disulfides stabilise this stretch: cysteine 970–cysteine 1000, cysteine 993–cysteine 1045, cysteine 1010–cysteine 1015, cysteine 1046–cysteine 1051, and cysteine 1085–cysteine 1089. Residues 1106–1126 (WIVLIVLCVFLLFSLVLLSIL) form a helical membrane-spanning segment. The interval 1122–1135 (LLSILCPVRKHKKS) is binding to the ribonucleoprotein. At 1127–1135 (CPVRKHKKS) the chain is on the cytoplasmic side.

The protein belongs to the hantavirus envelope glycoprotein family. In terms of assembly, homodimer. Homotetramer; forms heterotetrameric Gn-Gc spikes in the pre-fusion conformation. Interacts (via C-terminus) with the nucleoprotein. Interacts with host TUFM; this interaction contributes to the virus-induced degradation of mitochondria by autophagy, which leads to degradation of host MAVS and inhibition of type I interferon (IFN) responses. Interacts with host MAP1LC3B; this interaction contributes to the virus-induced degradation of mitochondria by autophagy, which leads to degradation of host MAVS and inhibition of type I interferon (IFN) responses. Homodimer. Homotetramer; forms heterotetrameric Gn-Gc spikes in the pre-fusion conformation. Homotrimer; forms homotrimer in the post-fusion conformation at acidic pH. Interacts (via C-terminus) with the nucleoprotein. In terms of processing, envelope polyprotein precursor is quickly cleaved in vivo just after synthesis, presumably by host signal peptidase.

Its subcellular location is the virion membrane. The protein localises to the host cell surface. The protein resides in the host Golgi apparatus membrane. It is found in the host endoplasmic reticulum membrane. It localises to the host mitochondrion. Functionally, forms homotetramers with glycoprotein C at the surface of the virion. Attaches the virion to host cell receptors including integrin ITGAV/ITGB3. This attachment induces virion internalization predominantly through clathrin-dependent endocytosis. May also bind to host C1QBP for virus entry into the host cell. Mediates the assembly and budding of infectious virus particles through its interaction with the nucleocapsid protein and the viral genome. May dysregulate normal immune and endothelial cell responses through an ITAM motif. Translocates to mitochondria, binds to host TUFM and recruits MAP1LC3B. These interactions induce mitochondrial autophagy and therefore destruction of host MAVS leading to inhibition of type I interferon (IFN) responses. Concomitant breakdown of glycoprotein N is apparently prevented by the nucleoprotein that may inhibit Gn-stimulated autophagosome-lysosome fusion. Interacts with the viral genomic RNA. In terms of biological role, forms homotetramers with glycoprotein N at the surface of the virion. Attaches the virion to host cell receptors including integrin ITGAV/ITGB3. This attachment induces virion internalization predominantly through clathrin-dependent endocytosis. May also bind to host C1QBP for virus entry into the host cell. Class II fusion protein that promotes fusion of viral membrane with host endosomal membrane after endocytosis of the virion. This chain is Envelopment polyprotein (GP), found in Hantaan virus (strain Lee) (Lee virus).